A 931-amino-acid chain; its full sequence is Protein translocase subunit SecA (931 aa).

ATP contacts are provided by residues Gln-87, 105 to 109, and Asp-515; that span reads GEGKT. Residues Cys-915, Cys-917, Cys-926, and His-927 each coordinate Zn(2+).

The protein belongs to the SecA family. In terms of assembly, monomer and homodimer. Part of the essential Sec protein translocation apparatus which comprises SecA, SecYEG and auxiliary proteins SecDF-YajC and YidC. It depends on Zn(2+) as a cofactor.

The protein localises to the cell inner membrane. The protein resides in the cytoplasm. The catalysed reaction is ATP + H2O + cellular proteinSide 1 = ADP + phosphate + cellular proteinSide 2.. Its function is as follows. Part of the Sec protein translocase complex. Interacts with the SecYEG preprotein conducting channel. Has a central role in coupling the hydrolysis of ATP to the transfer of proteins into and across the cell membrane, serving both as a receptor for the preprotein-SecB complex and as an ATP-driven molecular motor driving the stepwise translocation of polypeptide chains across the membrane. The chain is Protein translocase subunit SecA from Burkholderia pseudomallei (strain K96243).